The sequence spans 190 residues: Glycine cleavage system transcriptional repressor (190 aa).

ACT domains lie at 10-91 (VITA…PRPP) and 97-176 (WVQV…GSIN).

It is found in the cytoplasm. In terms of biological role, negative transcriptional regulator of the glycine cleavage system operon (GCV). Does not autoregulate its own expression. It is not yet known how GcvR acts as a repressor. It does not seem to bind DNA. It could interact with GcvA and suppress its activatory activity. This is Glycine cleavage system transcriptional repressor (gcvR) from Escherichia coli (strain K12).